Consider the following 520-residue polypeptide: Probable E3 ubiquitin-protein ligase rbrA (520 aa).

The segment covering 1 to 42 (MTDDEMYEDYDVDDDSAEESGNESLDDTEYDDAATQEFDFDE) has biased composition (acidic residues). A disordered region spans residues 1–51 (MTDDEMYEDYDVDDDSAEESGNESLDDTEYDDAATQEFDFDENQPQRSLGK). Positions 135-354 (GNVSCLICLE…GGYYNCNKYD (220 aa)) are TRIAD supradomain. Zn(2+) contacts are provided by Cys-139, Cys-142, Cys-156, His-158, Cys-161, Cys-164, Cys-184, Cys-189, Cys-228, Cys-233, Cys-250, Cys-252, Cys-257, Cys-260, His-268, Cys-273, Cys-300, and Cys-303. An RING-type 1 zinc finger spans residues 139 to 189 (CLICLEDYPPTQTFALICNHRYCLPCYKNYLEIKVSEGPECIYTPCPAPKC). The IBR-type zinc finger occupies 208–273 (ERFNNFILKS…EIGDHMPCPC (66 aa)). Residues 300–333 (CPECRSPIEKNGGCMHMTCRKNAGGCGFEFCWLC) form an RING-type 2; atypical zinc finger. Cys-313 is an active-site residue. Cys-318, Cys-325, Cys-330, Cys-333, His-340, and Cys-350 together coordinate Zn(2+).

Belongs to the RBR family.

It carries out the reaction [E2 ubiquitin-conjugating enzyme]-S-ubiquitinyl-L-cysteine + [acceptor protein]-L-lysine = [E2 ubiquitin-conjugating enzyme]-L-cysteine + [acceptor protein]-N(6)-ubiquitinyl-L-lysine.. It participates in protein modification; protein ubiquitination. In terms of biological role, might act as an E3 ubiquitin-protein ligase. Appears to be required for normal cell-type proportioning and cell sorting during multicellular development. In addition to being necessary for a normal percentage of prestalk cells and the organization of the slug, rbrA is also necessary for spore cell viability. In Dictyostelium discoideum (Social amoeba), this protein is Probable E3 ubiquitin-protein ligase rbrA (rbrA).